The following is a 389-amino-acid chain: Chalcone synthase 1 (389 aa).

Cys-164 is an active-site residue.

Belongs to the thiolase-like superfamily. Chalcone/stilbene synthases family.

The enzyme catalyses (E)-4-coumaroyl-CoA + 3 malonyl-CoA + 3 H(+) = 2',4,4',6'-tetrahydroxychalcone + 3 CO2 + 4 CoA. It participates in secondary metabolite biosynthesis; flavonoid biosynthesis. The primary product of this enzyme is 4,2',4',6'-tetrahydroxychalcone (also termed naringenin-chalcone or chalcone) which can under specific conditions spontaneously isomerize into naringenin. The sequence is that of Chalcone synthase 1 (CHS1) from Trifolium subterraneum (Subterranean clover).